Consider the following 87-residue polypeptide: Ribonuclease P protein component 1 (87 aa).

This sequence belongs to the eukaryotic/archaeal RNase P protein component 1 family. Consists of a catalytic RNA component and at least 4-5 protein subunits.

Its subcellular location is the cytoplasm. The catalysed reaction is Endonucleolytic cleavage of RNA, removing 5'-extranucleotides from tRNA precursor.. Its function is as follows. Part of ribonuclease P, a protein complex that generates mature tRNA molecules by cleaving their 5'-ends. The polypeptide is Ribonuclease P protein component 1 (Thermoplasma acidophilum (strain ATCC 25905 / DSM 1728 / JCM 9062 / NBRC 15155 / AMRC-C165)).